Reading from the N-terminus, the 347-residue chain is Ceramide very long chain fatty acid hydroxylase scs7 (347 aa).

At 1 to 156 the chain is on the cytoplasmic side; it reads MASVTSEKCV…GNFLEPLTKT (156 aa). Residues 157–177 form a helical membrane-spanning segment; the sequence is PWYMIPLIWVPCVTYGFLYAC. Threonine 178 is a topological domain (lumenal). The helical transmembrane segment at 179-199 threads the bilayer; sequence GIPFSVAITFFIIGLFTWTLV. The Cytoplasmic segment spans residues 200-238; it reads EYTMHRFLFHLDEYTPDHPIFLTMHFAFHGCHHFLPADK. Zn(2+)-binding residues include histidine 204, histidine 209, histidine 228, histidine 231, and histidine 232. The chain crosses the membrane as a helical span at residues 239-259; that stretch reads YRLVMPPALFLIFATPWYHFI. A topological domain (lumenal) is located at residue glutamine 260. A helical transmembrane segment spans residues 261–281; that stretch reads LVLPHYIGVAGFSGAILGYVF. Topologically, residues 282–347 are cytoplasmic; the sequence is YDLTHYFLHH…EQGKISTKAK (66 aa). Positions 286, 290, 306, 309, and 310 each coordinate Zn(2+).

It belongs to the sterol desaturase family. SCS7 subfamily. Requires Zn(2+) as cofactor.

The protein resides in the endoplasmic reticulum membrane. It functions in the pathway sphingolipid metabolism. In terms of biological role, ceramide hydroxylase involved in the hydroxylation of sphingolipid-associated very long chain fatty acids. Postulated to hydroxylate the very long chain fatty acid of dihydroceramides and phytoceramides at C-2. This Schizosaccharomyces pombe (strain 972 / ATCC 24843) (Fission yeast) protein is Ceramide very long chain fatty acid hydroxylase scs7.